The following is a 203-amino-acid chain: N-(5'-phosphoribosyl)anthranilate isomerase (203 aa).

It belongs to the TrpF family.

The catalysed reaction is N-(5-phospho-beta-D-ribosyl)anthranilate = 1-(2-carboxyphenylamino)-1-deoxy-D-ribulose 5-phosphate. It participates in amino-acid biosynthesis; L-tryptophan biosynthesis; L-tryptophan from chorismate: step 3/5. This is N-(5'-phosphoribosyl)anthranilate isomerase from Thermoanaerobacter pseudethanolicus (strain ATCC 33223 / 39E) (Clostridium thermohydrosulfuricum).